We begin with the raw amino-acid sequence, 559 residues long: MPKEKYDPPDPRRLYTIMSAEEVASGKKSHWTELEISGRVRSLSSSLWTLTHLTALHINNNNLSRIPPEIAKLPHLVYLNLSSNKLRSLPAELGNMVTLRELLLNNNCLRVLPYELGRLFQLQTLGLKGNPLSQDILNLYQEPDGTRKLLNYMLDNLAVHPEQLPQRPWITLRERDQMMPTAVFTVMCYNVLCDKYATRQLYGYCPSWALNWEYRKKGIMEEITNCDADIISLQEVETEQYYTFFLETLKDRGYDGFFCPKSRAKLVSEQERKHVDGCGVFFKTEKFALVQKHTVEFNQVAMANSEGSEVMLNRVMTKDNIGVAVLLEVKKDLFATGLKPPPEKQLLLVANAHMHWDPEYSDVKLIQTMMFLSELKSIAERASGSINSSSPTSETSSIPIVLCADLNSLPDSGVVEYLSNGGVAENHKDFKELRYSDCLTNFSCNGKNGKPDGSITHSFQLKSAYEGNLMPYTNYTYDFKGVIDYIFFSKTHMSVLGVLGPLETQWLKDNNITGCPHPHIPSDHFSLLAQLEYHPPLPPLNGLHLPVHSTACESKMLTE.

A required for interaction with cnot1, cnot3 and cnot7 region spans residues Met-1–Lys-148. The tract at residues Met-1–Thr-550 is nuclease domain. 4 LRR repeats span residues His-52–Leu-73, His-75–Met-96, Thr-98–Phe-120, and Gln-121–Pro-143. Glu-235 is a binding site for Mg(2+). Residues Glu-235, Glu-271, His-353, and Pro-358 each coordinate substrate. Asp-405 lines the Mg(2+) pocket. Residue Asp-405 is the Proton donor/acceptor of the active site. Residues Asn-407, Asn-474, and Phe-479 each coordinate substrate.

The protein belongs to the CCR4/nocturin family. As to quaternary structure, component of the CCR4-NOT complex. Requires Mg(2+) as cofactor.

It localises to the cytoplasm. It is found in the nucleus. It catalyses the reaction Exonucleolytic cleavage of poly(A) to 5'-AMP.. Its function is as follows. Poly(A) nuclease with 3'-5' RNase activity. Catalytic component of the CCR4-NOT complex which is one of the major cellular mRNA deadenylases and is linked to various cellular processes including bulk mRNA degradation, miRNA-mediated repression, translational repression during translational initiation and general transcription regulation. Additional complex functions may be a consequence of its influence on mRNA expression. In Danio rerio (Zebrafish), this protein is CCR4-NOT transcription complex subunit 6-like (cnot6l).